The sequence spans 302 residues: Polyamine aminopropyltransferase (302 aa).

Residues 4 to 239 (WTWHLEWQTP…GLWGFIYASD (236 aa)) enclose the PABS domain. Glutamine 33 is a binding site for S-methyl-5'-thioadenosine. Positions 64 and 88 each coordinate spermidine. S-methyl-5'-thioadenosine is bound by residues aspartate 108 and 140-141 (DG). Aspartate 158 (proton acceptor) is an active-site residue. Proline 167 serves as a coordination point for S-methyl-5'-thioadenosine.

It belongs to the spermidine/spermine synthase family. Homodimer or homotetramer.

It localises to the cytoplasm. The enzyme catalyses S-adenosyl 3-(methylsulfanyl)propylamine + putrescine = S-methyl-5'-thioadenosine + spermidine + H(+). It participates in amine and polyamine biosynthesis; spermidine biosynthesis; spermidine from putrescine: step 1/1. Functionally, catalyzes the irreversible transfer of a propylamine group from the amino donor S-adenosylmethioninamine (decarboxy-AdoMet) to putrescine (1,4-diaminobutane) to yield spermidine. This chain is Polyamine aminopropyltransferase, found in Sulfolobus acidocaldarius (strain ATCC 33909 / DSM 639 / JCM 8929 / NBRC 15157 / NCIMB 11770).